A 153-amino-acid polypeptide reads, in one-letter code: 6,7-dimethyl-8-ribityllumazine synthase 1 (153 aa).

Residues F16, 47-49 (ALE), and 76-78 (MVI) contribute to the 5-amino-6-(D-ribitylamino)uracil site. 81 to 82 (ET) lines the (2S)-2-hydroxy-3-oxobutyl phosphate pocket. Catalysis depends on H84, which acts as the Proton donor. 5-amino-6-(D-ribitylamino)uracil is bound at residue N109. Position 123 (R123) interacts with (2S)-2-hydroxy-3-oxobutyl phosphate.

This sequence belongs to the DMRL synthase family.

The catalysed reaction is (2S)-2-hydroxy-3-oxobutyl phosphate + 5-amino-6-(D-ribitylamino)uracil = 6,7-dimethyl-8-(1-D-ribityl)lumazine + phosphate + 2 H2O + H(+). It participates in cofactor biosynthesis; riboflavin biosynthesis; riboflavin from 2-hydroxy-3-oxobutyl phosphate and 5-amino-6-(D-ribitylamino)uracil: step 1/2. Its function is as follows. Catalyzes the formation of 6,7-dimethyl-8-ribityllumazine by condensation of 5-amino-6-(D-ribitylamino)uracil with 3,4-dihydroxy-2-butanone 4-phosphate. This is the penultimate step in the biosynthesis of riboflavin. This chain is 6,7-dimethyl-8-ribityllumazine synthase 1, found in Rhizobium meliloti (strain 1021) (Ensifer meliloti).